A 140-amino-acid polypeptide reads, in one-letter code: Chromatin accessibility complex 16kD protein (140 aa).

The interval 111 to 140 (LNRSAGSDDDDDDDDDDDEEESESESESDE) is disordered. Residues 117–140 (SDDDDDDDDDDDEEESESESESDE) show a composition bias toward acidic residues.

As to quaternary structure, component of the chromatin accessibility complex (CHRAC), composed of Chrac-14, Chrac-16, Acf and Iswi. Forms a heterodimer with Chrac-14. The Chrac-14/Chrac-16 heterodimer interacts with Acf (via N-terminus). Stabilizes the interaction between Chrac-14 and Iswi.

The protein localises to the nucleus. Its function is as follows. Histone-like protein which promotes nucleosome sliding of ATP-dependent nucleosome remodeling complexes. Part of the chromatin-accessibility complex (CHRAC) which uses energy/ATP to increase the general accessibility of DNA in chromatin. As a heterodimer with Chrac-14, binds DNA and facilitates nucleosome sliding by Acf. As part of the CHRAC complex, required for oogenesis. The protein is Chromatin accessibility complex 16kD protein of Drosophila melanogaster (Fruit fly).